We begin with the raw amino-acid sequence, 56 residues long: Small ribosomal subunit protein uS14 (56 aa).

4 residues coordinate Zn(2+): Cys-21, Cys-24, Cys-39, and Cys-42.

The protein belongs to the universal ribosomal protein uS14 family. It depends on Zn(2+) as a cofactor.

The sequence is that of Small ribosomal subunit protein uS14 (RPS29) from Candida glabrata (strain ATCC 2001 / BCRC 20586 / JCM 3761 / NBRC 0622 / NRRL Y-65 / CBS 138) (Yeast).